We begin with the raw amino-acid sequence, 246 residues long: Thiamine import ATP-binding protein ThiQ (246 aa).

The region spanning 10 to 239 (VKLDALAFAY…QGPPAFARYL (230 aa)) is the ABC transporter domain. 41–48 (GPSGSGKS) lines the ATP pocket.

Belongs to the ABC transporter superfamily. Thiamine importer (TC 3.A.1.19.1) family. As to quaternary structure, the complex is composed of two ATP-binding proteins (ThiQ), two transmembrane proteins (ThiP) and a solute-binding protein (ThiB).

The protein resides in the cell inner membrane. It carries out the reaction thiamine(out) + ATP + H2O = thiamine(in) + ADP + phosphate + H(+). Part of the ABC transporter complex ThiBPQ involved in thiamine import. Responsible for energy coupling to the transport system. The protein is Thiamine import ATP-binding protein ThiQ of Chelativorans sp. (strain BNC1).